We begin with the raw amino-acid sequence, 510 residues long: MDKQLVLVIDFGGQYNQLIARRVREHNVYCEIVPYTYSIDKIKEKKPSAVIFTGGQNSVYGEDSPRMDKEIFDLGVPVLGICYGHQLITYTLGGEVMGSEIREYGKTDVTLDSVCELFEGIDIENSCWMSHTDRVAKVPEGFKVVGHTNVCPVAAMANTEKKIYGVQFHPEVLHTPFGEQLFSNFLFKICGLKEDWSMSSFAKEKIQEIKDIVGDKKVLCALSGGVDSSVAAVLVHKAIGKQLTCVFVDHGLLRKDEGDQVESIFRKQFDMNLIRVNAKDRFLGKLKGISDPERKRKIIGEEFIRVFEEEANKLGQIDFLVQGTIYPDVVESGTDTSATIKSHHNVGGLPEDMQFELIEPLRELFKDEVRAVGEELGIPHKLVWRQPFPGPGLGIRVLGEVTEEKLEIVREADAIFREEIANAGLEEKIWQYFACLPNIHSVGVMGDGRTYCETIALRAVTSSDAMTSDWARIPYEVLDKVSRRIVNEVKGVNRIVYDVTSKPPATIEWE.

Residues 5-195 enclose the Glutamine amidotransferase type-1 domain; the sequence is LVLVIDFGGQ…LFKICGLKED (191 aa). Residue C82 is the Nucleophile of the active site. Residues H169 and E171 contribute to the active site. Positions 196 to 385 constitute a GMPS ATP-PPase domain; the sequence is WSMSSFAKEK…LGIPHKLVWR (190 aa). 223–229 serves as a coordination point for ATP; the sequence is SGGVDSS.

As to quaternary structure, homodimer.

The enzyme catalyses XMP + L-glutamine + ATP + H2O = GMP + L-glutamate + AMP + diphosphate + 2 H(+). It functions in the pathway purine metabolism; GMP biosynthesis; GMP from XMP (L-Gln route): step 1/1. Functionally, catalyzes the synthesis of GMP from XMP. This Clostridium acetobutylicum (strain ATCC 824 / DSM 792 / JCM 1419 / IAM 19013 / LMG 5710 / NBRC 13948 / NRRL B-527 / VKM B-1787 / 2291 / W) protein is GMP synthase [glutamine-hydrolyzing].